Consider the following 453-residue polypeptide: Ras association domain-containing protein 10 (453 aa).

One can recognise a Ras-associating domain in the interval 1-107 (MENEEWKVSV…VKFVLVRSEA (107 aa)). Residues 262–295 (QKCDEVLLLQEQISRQEEAMEQMTVQIQEELNKR) adopt a coiled-coil conformation. A compositionally biased stretch (basic and acidic residues) spans 299–310 (RRQEELSSKEQE). Disordered regions lie at residues 299–322 (RRQEELSSKEQESSLSDSGADQGG) and 402–453 (GVTT…ESLV). 2 stretches are compositionally biased toward polar residues: residues 402 to 411 (GVTTTGSPTD) and 433 to 444 (TGLSSMHSQDSD).

Its subcellular location is the cytoplasm. It localises to the cytosol. The protein resides in the cytoskeleton. The protein localises to the microtubule organizing center. It is found in the centrosome. Its subcellular location is the spindle pole. May play role in regulating embryonic neurogenesis. This is Ras association domain-containing protein 10 (rassf10) from Xenopus laevis (African clawed frog).